Consider the following 230-residue polypeptide: V-type proton ATPase subunit E (230 aa).

The protein belongs to the V-ATPase E subunit family. V-ATPase is a heteromultimeric enzyme composed of a peripheral catalytic V1 complex (components A to H) attached to an integral membrane V0 proton pore complex (components: a, c, c', c'', d, e, f and VOA1).

The protein resides in the vacuole membrane. Subunit of the V1 complex of vacuolar(H+)-ATPase (V-ATPase), a multisubunit enzyme composed of a peripheral complex (V1) that hydrolyzes ATP and a membrane integral complex (V0) that translocates protons. V-ATPase is responsible for acidifying and maintaining the pH of intracellular compartments. The polypeptide is V-type proton ATPase subunit E (Neurospora crassa (strain ATCC 24698 / 74-OR23-1A / CBS 708.71 / DSM 1257 / FGSC 987)).